The primary structure comprises 120 residues: Ribosome-binding factor A (120 aa).

The protein belongs to the RbfA family. Monomer. Binds 30S ribosomal subunits, but not 50S ribosomal subunits or 70S ribosomes.

Its subcellular location is the cytoplasm. Functionally, one of several proteins that assist in the late maturation steps of the functional core of the 30S ribosomal subunit. Associates with free 30S ribosomal subunits (but not with 30S subunits that are part of 70S ribosomes or polysomes). Required for efficient processing of 16S rRNA. May interact with the 5'-terminal helix region of 16S rRNA. The sequence is that of Ribosome-binding factor A from Rickettsia peacockii (strain Rustic).